Here is a 458-residue protein sequence, read N- to C-terminus: ATP synthase subunit beta (458 aa).

Residue 148–155 (GGAGVGKT) participates in ATP binding.

The protein belongs to the ATPase alpha/beta chains family. In terms of assembly, F-type ATPases have 2 components, CF(1) - the catalytic core - and CF(0) - the membrane proton channel. CF(1) has five subunits: alpha(3), beta(3), gamma(1), delta(1), epsilon(1). CF(0) has three main subunits: a(1), b(2) and c(9-12). The alpha and beta chains form an alternating ring which encloses part of the gamma chain. CF(1) is attached to CF(0) by a central stalk formed by the gamma and epsilon chains, while a peripheral stalk is formed by the delta and b chains.

The protein localises to the cell inner membrane. It carries out the reaction ATP + H2O + 4 H(+)(in) = ADP + phosphate + 5 H(+)(out). In terms of biological role, produces ATP from ADP in the presence of a proton gradient across the membrane. The catalytic sites are hosted primarily by the beta subunits. The protein is ATP synthase subunit beta of Ectopseudomonas mendocina (strain ymp) (Pseudomonas mendocina).